Here is a 737-residue protein sequence, read N- to C-terminus: uncharacterized protein (737 aa).

7 helical membrane passes run Leu11–Leu31, Glu36–Phe56, Trp60–Tyr80, Thr118–Tyr138, Ile142–Tyr162, Ala164–Leu184, and Val200–Ala220. The segment at Pro556–His611 is disordered. The span at Lys581 to Val603 shows a compositional bias: basic and acidic residues. Residues Leu618 to Phe638 traverse the membrane as a helical segment.

It is found in the cell membrane. This is an uncharacterized protein from Bacillus subtilis (strain 168).